The primary structure comprises 430 residues: MKLKINSQGLKGRLKVPGDKSISHRSIMFGSIAKGKTIIHDILRGEDVLSTIEAFRALGVEIEDDGQVITVHGQGISKLKEPEKALDMGNSGTSTRLLSGILAGLPFEATLFGDDSLSKRPMDRVATPLQMMGAEIVGQTDKVKLPMTIKGSAHLKAIDYILPVASAQVKSAVIFAALQAEGLTKVVEKEKTRSHTEEMLVQFGGEITVSDKTILVPGGQKLLGQEVTVPGDISSAAFWLVAGLVVENSGLILENVGINETRTGILEVIQAMGGQLEILEQDEVAKAATLKVKASQLKGTEISGDLIPRLIDELPIIALLATQAEGKTIIRDAAELKVKETDRIAVVADALNSMGANIEPTDDGMIIQGGTKLHAPENAINTLGDHRIGMMVAIAALLVENGEIELERAEAIQTSYPSFFDDLEKLSGNL.

Residues Lys-20, Ser-21, and Arg-25 each contribute to the 3-phosphoshikimate site. Lys-20 is a phosphoenolpyruvate binding site. Gly-92 and Arg-120 together coordinate phosphoenolpyruvate. 3-phosphoshikimate-binding residues include Ser-166, Gln-168, Asp-312, and Lys-339. Phosphoenolpyruvate is bound at residue Gln-168. The active-site Proton acceptor is the Asp-312. Phosphoenolpyruvate-binding residues include Arg-343 and Arg-387.

It belongs to the EPSP synthase family. Monomer.

It localises to the cytoplasm. It catalyses the reaction 3-phosphoshikimate + phosphoenolpyruvate = 5-O-(1-carboxyvinyl)-3-phosphoshikimate + phosphate. Its pathway is metabolic intermediate biosynthesis; chorismate biosynthesis; chorismate from D-erythrose 4-phosphate and phosphoenolpyruvate: step 6/7. In terms of biological role, catalyzes the transfer of the enolpyruvyl moiety of phosphoenolpyruvate (PEP) to the 5-hydroxyl of shikimate-3-phosphate (S3P) to produce enolpyruvyl shikimate-3-phosphate and inorganic phosphate. The chain is 3-phosphoshikimate 1-carboxyvinyltransferase from Lactococcus lactis subsp. cremoris (strain MG1363).